The following is a 188-amino-acid chain: Elongation factor P-like protein (188 aa).

This sequence belongs to the elongation factor P family.

This chain is Elongation factor P-like protein, found in Xylella fastidiosa (strain M23).